Reading from the N-terminus, the 152-residue chain is Nucleoside diphosphate kinase A (152 aa).

ATP is bound by residues Lys-12, Phe-60, Arg-88, and Thr-94. Lys-100 participates in a covalent cross-link: Glycyl lysine isopeptide (Lys-Gly) (interchain with G-Cter in ubiquitin). ATP-binding residues include Arg-105 and Asn-115. The Pros-phosphohistidine intermediate role is filled by His-118. Ser-120, Ser-122, and Ser-125 each carry phosphoserine.

Belongs to the NDK family. Hexamer of two different chains: An and B (A6, A5B, A4B2, A3B3, A2B4, AB5, B6). Interacts with PRUNE1. Component of the SET complex, composed of at least ANP32A, APEX1, HMGB2, NME1, SET and TREX1. Within this complex, interacts directly with SET. Also interacts with TREX1, but only following translocation to the nucleus. Requires Mg(2+) as cofactor. As to expression, isoform 1 is expressed in heart, brain, placenta, lung, liver, skeletal muscle, pancreas, spleen and thymus. Expressed in lung carcinoma cell lines but not in normal lung tissues. Isoform 2 is ubiquitously expressed and its expression is also related to tumor differentiation.

Its subcellular location is the cytoplasm. The protein localises to the nucleus. The catalysed reaction is a 2'-deoxyribonucleoside 5'-diphosphate + ATP = a 2'-deoxyribonucleoside 5'-triphosphate + ADP. It carries out the reaction a ribonucleoside 5'-diphosphate + ATP = a ribonucleoside 5'-triphosphate + ADP. Its activity is regulated as follows. Autophosphorylation at His-118 increases serine/threonine protein kinase activity of the enzyme. Interaction with the SET complex inhibits the endonuclease activity. Major role in the synthesis of nucleoside triphosphates other than ATP. The ATP gamma phosphate is transferred to the NDP beta phosphate via a ping-pong mechanism, using a phosphorylated active-site intermediate. Possesses nucleoside-diphosphate kinase, serine/threonine-specific protein kinase, geranyl and farnesyl pyrophosphate kinase, histidine protein kinase and 3'-5' exonuclease activities. Involved in cell proliferation, differentiation and development, signal transduction, G protein-coupled receptor endocytosis, and gene expression. Required for neural development including neural patterning and cell fate determination. During GZMA-mediated cell death, works in concert with TREX1. NME1 nicks one strand of DNA and TREX1 removes bases from the free 3' end to enhance DNA damage and prevent DNA end reannealing and rapid repair. The polypeptide is Nucleoside diphosphate kinase A (NME1) (Homo sapiens (Human)).